A 100-amino-acid polypeptide reads, in one-letter code: Ferredoxin (100 aa).

The propeptide occupies methionine 1–phenylalanine 8. A 2Fe-2S ferredoxin-type domain is found at glycine 9–leucine 100. [2Fe-2S] cluster contacts are provided by cysteine 46, cysteine 52, cysteine 55, and cysteine 85.

[2Fe-2S] cluster is required as a cofactor.

Its subcellular location is the hydrogenosome. Ferredoxins are iron-sulfur proteins that transfer electrons in a wide variety of metabolic reactions. It links pyruvate:ferredoxin oxidoreductase to hydrogenase. The protein is Ferredoxin of Trichomonas vaginalis.